The chain runs to 101 residues: Ubiquitin-related modifier 1 homolog 1 (101 aa).

At Gly101 the chain carries 1-thioglycine. Residue Gly101 forms a Glycyl lysine isopeptide (Gly-Lys) (interchain with K-? in acceptor proteins) linkage.

It belongs to the URM1 family. Post-translationally, C-terminal thiocarboxylation occurs in 2 steps, it is first acyl-adenylated (-COAMP) via the hesA/moeB/thiF part of the MOCS3 homolog, then thiocarboxylated (-COSH) via the rhodanese domain of the MOCS3 homolog.

It is found in the cytoplasm. It participates in tRNA modification; 5-methoxycarbonylmethyl-2-thiouridine-tRNA biosynthesis. Acts as a sulfur carrier required for 2-thiolation of mcm(5)S(2)U at tRNA wobble positions of cytosolic tRNA(Lys), tRNA(Glu) and tRNA(Gln). Serves as sulfur donor in tRNA 2-thiolation reaction by being thiocarboxylated (-COSH) at its C-terminus by MOCS3. The sulfur is then transferred to tRNA to form 2-thiolation of mcm(5)S(2)U. Also acts as a ubiquitin-like protein (UBL) that is covalently conjugated via an isopeptide bond to lysine residues of target proteins. The thiocarboxylated form serves as substrate for conjugation and oxidative stress specifically induces the formation of UBL-protein conjugates. The protein is Ubiquitin-related modifier 1 homolog 1 of Arabidopsis thaliana (Mouse-ear cress).